A 430-amino-acid chain; its full sequence is MKIGFLGFGKSNRSLLKYLLNHQEAKFFVSEAKTLDGETKKFLEEHSVEYEEGGHTEKLLDCDVVYVSPGIKPDTSMIELLSSRGVKLSTELQFFLDNVDPKKVVGITGTDGKSTATALMYHVLSGRGFKTFLGGNFGTPAVEALEGEYDYYVLEMSSFQLFWSERPYLSNFLVLNISEDHLDWHSSFKEYVDSKLKPAFLQTEGDLFVYNKHIERLRNLEGVRSRKIPFWTDENFATEKELIVRGKKYTLPGNYPYQMRENILAVSVLYMEMFNELESFLELLRDFKPLPHRMEYLGQIDGRHFYNDSKATSTHAVLGALSNFDKVVLIMCGIGKKENYSLFVEKASPKLKHLIMFGEISKELAPFVGKIPHSIVENMEEAFEKAMEVSEKGDVILLSPGGASFDMYENYAKRGEHFREIFKRHGGDEV.

109–115 is a binding site for ATP; it reads GTDGKST.

It belongs to the MurCDEF family.

It is found in the cytoplasm. The enzyme catalyses UDP-N-acetyl-alpha-D-muramoyl-L-alanine + D-glutamate + ATP = UDP-N-acetyl-alpha-D-muramoyl-L-alanyl-D-glutamate + ADP + phosphate + H(+). It participates in cell wall biogenesis; peptidoglycan biosynthesis. Its function is as follows. Cell wall formation. Catalyzes the addition of glutamate to the nucleotide precursor UDP-N-acetylmuramoyl-L-alanine (UMA). The polypeptide is UDP-N-acetylmuramoylalanine--D-glutamate ligase (Thermotoga maritima (strain ATCC 43589 / DSM 3109 / JCM 10099 / NBRC 100826 / MSB8)).